The sequence spans 426 residues: Histidine--tRNA ligase (426 aa).

This sequence belongs to the class-II aminoacyl-tRNA synthetase family. As to quaternary structure, homodimer.

The protein resides in the cytoplasm. The catalysed reaction is tRNA(His) + L-histidine + ATP = L-histidyl-tRNA(His) + AMP + diphosphate + H(+). The protein is Histidine--tRNA ligase of Pseudoalteromonas atlantica (strain T6c / ATCC BAA-1087).